Consider the following 341-residue polypeptide: Thymidine kinase (341 aa).

19 to 26 lines the ATP pocket; the sequence is GAYGIGKT. Catalysis depends on glutamate 48, which acts as the Proton acceptor. Residues tyrosine 66 and glutamine 90 each contribute to the substrate site. Position 183 (arginine 183) interacts with ATP. Arginine 189 lines the substrate pocket.

The protein belongs to the herpesviridae thymidine kinase family. In terms of assembly, homodimer.

The catalysed reaction is thymidine + ATP = dTMP + ADP + H(+). Catalyzes the transfer of the gamma-phospho group of ATP to thymidine to generate dTMP in the salvage pathway of pyrimidine synthesis. The dTMP serves as a substrate for DNA polymerase during viral DNA replication. Allows the virus to be reactivated and to grow in non-proliferative cells lacking a high concentration of phosphorylated nucleic acid precursors. This is Thymidine kinase from Varicella-zoster virus (strain Oka vaccine) (HHV-3).